The sequence spans 399 residues: Bone morphogenetic protein 8A (399 aa).

Positions 1-19 are cleaved as a signal peptide; that stretch reads MAMRPGPLWLLGLALCALG. The propeptide occupies 20 to 260; the sequence is GGHGPRPPHT…ASQSPVRAPR (241 aa). An N-linked (GlcNAc...) asparagine glycan is attached at N155. The disordered stretch occupies residues 257–286; that stretch reads RAPRAARPLKRRQPKKTNELPHPNKLPGIF. Cystine bridges form between C298–C364, C327–C396, and C331–C398. N340 carries an N-linked (GlcNAc...) asparagine glycan.

Belongs to the TGF-beta family. As to quaternary structure, homodimer; disulfide-linked. Expressed in testis. expressed in trophoblast cells of the labyrinthine region of the placenta and in the inner root sheath of hair follicles of early postnatal skin. Expressed predominantly in the neonatal mouse spermatogonia.

It is found in the secreted. Its function is as follows. Growth factor of the TGF-beta superfamily that plays important role in various biological processes, including spermatogenesis, osteogenesis, steroidogenesis as well as regulation of energy balance. Initiates the canonical BMP signaling cascade by associating with type I receptor BMPR1A and type II receptor BMPR2. Once all three components are bound together in a complex at the cell surface, BMPR2 phosphorylates and activates BMPR1A. In turn, BMPR1A propagates signal by phosphorylating SMAD1/5/8 that travel to the nucleus and act as activators and repressors of transcription of target genes. In addition, activates the SMAD2/3 pathway. This chain is Bone morphogenetic protein 8A (Bmp8a), found in Mus musculus (Mouse).